A 368-amino-acid polypeptide reads, in one-letter code: DNA replication and repair protein RecF (368 aa).

Gly30–Thr37 provides a ligand contact to ATP.

The protein belongs to the RecF family.

It is found in the cytoplasm. Its function is as follows. The RecF protein is involved in DNA metabolism; it is required for DNA replication and normal SOS inducibility. RecF binds preferentially to single-stranded, linear DNA. It also seems to bind ATP. This is DNA replication and repair protein RecF from Trichlorobacter lovleyi (strain ATCC BAA-1151 / DSM 17278 / SZ) (Geobacter lovleyi).